Consider the following 427-residue polypeptide: MVGSIFGWLGLLFAGMPVGFSLIFVALAFLILTNSTGINFAAQQMLGGIDNFTLLAVPFFVLTGHLMNSAGITERIFNFAKSLVGHITGSLGHVNIMASLLFSGMSGSALADAGGLGQLEIKSMRDAKYHDDFAGGLTAASCIIGPLVPPSVPLVIYGVVSNTSIGALFLAGAIPGLLCCIALMVMSYFICKKRGYMTLPKASRREQFKSLKEAFLSLLTPVIIIGGIFSGKFTPTEAAAVSSLYALFLGTVVYNTLTLQGFIEILKETVNTTAVVALMVMGVTVFGWIVAREQLPQMLADYFLTISDNPLVLLLLINLLLLFLGTFIESLALLLLLVPFLVPVASAVGIDPVHFGVMAILNLMIGILTPPMGMALYVVSRVGDIPFHTLTRGVLPLLVPLFIVLALVAVFPQFTLLLPELFLGYGQ.

12 consecutive transmembrane segments (helical) span residues 11–31 (LLFAGMPVGFSLIFVALAFLI), 52–72 (FTLLAVPFFVLTGHLMNSAGI), 82–102 (SLVGHITGSLGHVNIMASLLF), 140–160 (ASCIIGPLVPPSVPLVIYGVV), 165–185 (IGALFLAGAIPGLLCCIALMV), 214–234 (AFLSLLTPVIIIGGIFSGKFT), 246–266 (ALFLGTVVYNTLTLQGFIEIL), 270–290 (VNTTAVVALMVMGVTVFGWIV), 301–321 (DYFLTISDNPLVLLLLINLLL), 322–342 (LFLGTFIESLALLLLLVPFLV), 348–368 (VGIDPVHFGVMAILNLMIGIL), and 394–414 (VLPLLVPLFIVLALVAVFPQF).

The protein belongs to the TRAP transporter large permease family. As to quaternary structure, the complex comprises the extracytoplasmic solute receptor protein SiaP, and the two transmembrane proteins SiaQ and SiaM. SiaQ and SiaM form a tight 1:1 complex.

It localises to the cell inner membrane. Part of the tripartite ATP-independent periplasmic (TRAP) transport system SiaPQM that catalyzes unidirectional Na(+)-dependent sialic acid uptake. In Vibrio cholerae serotype O1 (strain ATCC 39315 / El Tor Inaba N16961), this protein is Sialic acid TRAP transporter large permease protein SiaM.